Reading from the N-terminus, the 319-residue chain is Transcription elongation factor A protein 1 (319 aa).

One can recognise a TFIIS N-terminal domain in the interval 1-78 (MQEIIKCREQ…DKWKQDIEGT (78 aa)). Positions 78-106 (TSATTTSSSSSSSSSTTSTTTTKTASPSE) are enriched in low complexity. Residues 78–146 (TSATTTSSSS…TTPKTSSPPI (69 aa)) form a disordered region. Positions 107-122 (SLKRKSISEDTSDRPT) are enriched in basic and acidic residues. Residues 133-146 (ISPPTTPKTSSPPI) are compositionally biased toward low complexity. The TFIIS central domain maps to 160-272 (LRNKTIQLFV…ASMLGQNNEA (113 aa)). The TFIIS-type zinc-finger motif lies at 275–317 (DQFQCGKCKQRKCTYTQLQTRSADEPPTTFVKCCVKGCGNRWR). 4 residues coordinate Zn(2+): C279, C282, C307, and C312.

Belongs to the TFS-II family.

The protein resides in the nucleus. Its function is as follows. Necessary for efficient RNA polymerase II transcription elongation past template-encoded arresting sites. The arresting sites in DNA have the property of trapping a certain fraction of elongating RNA polymerases that pass through, resulting in locked ternary complexes. Cleavage of the nascent transcript by S-II allows the resumption of elongation from the new 3'-terminus. This Dictyostelium discoideum (Social amoeba) protein is Transcription elongation factor A protein 1 (tcea1).